We begin with the raw amino-acid sequence, 102 residues long: Defensin (102 aa).

A signal peptide spans 1–25 (MKCATIVCTIAVVLAATLLNGSVQA). Residues 26 to 62 (APQEEAALSGGANLNTLLDELPEETHHAALENYRAKR) constitute a propeptide that is removed on maturation. 3 disulfide bridges follow: Cys65-Cys92, Cys78-Cys98, and Cys82-Cys100.

It belongs to the invertebrate defensin family. Type 1 subfamily.

The protein localises to the secreted. Functionally, responsible for the anti Gram-positive activity of immune hemolymph. The chain is Defensin (Def1) from Anopheles gambiae (African malaria mosquito).